We begin with the raw amino-acid sequence, 705 residues long: Elongation factor G (705 aa).

Positions 8 to 294 constitute a tr-type G domain; it reads NLYRNFGIMA…AVIDYLPSPL (287 aa). Residues 17–24, 92–96, and 146–149 each bind GTP; these read AHIDAGKT, DTPGH, and NKMD.

Belongs to the TRAFAC class translation factor GTPase superfamily. Classic translation factor GTPase family. EF-G/EF-2 subfamily.

It is found in the cytoplasm. Its function is as follows. Catalyzes the GTP-dependent ribosomal translocation step during translation elongation. During this step, the ribosome changes from the pre-translocational (PRE) to the post-translocational (POST) state as the newly formed A-site-bound peptidyl-tRNA and P-site-bound deacylated tRNA move to the P and E sites, respectively. Catalyzes the coordinated movement of the two tRNA molecules, the mRNA and conformational changes in the ribosome. The chain is Elongation factor G from Ruegeria pomeroyi (strain ATCC 700808 / DSM 15171 / DSS-3) (Silicibacter pomeroyi).